Consider the following 210-residue polypeptide: Thymidylate kinase (210 aa).

Gly11–Ser18 lines the ATP pocket.

Belongs to the thymidylate kinase family.

The enzyme catalyses dTMP + ATP = dTDP + ADP. In terms of biological role, phosphorylation of dTMP to form dTDP in both de novo and salvage pathways of dTTP synthesis. The chain is Thymidylate kinase from Vibrio parahaemolyticus serotype O3:K6 (strain RIMD 2210633).